Here is a 267-residue protein sequence, read N- to C-terminus: N-formylglutamate deformylase (267 aa).

It belongs to the N-formylglutamate deformylase family. As to quaternary structure, monomer.

It catalyses the reaction N-formyl-L-glutamate + H2O = formate + L-glutamate. It participates in amino-acid degradation; L-histidine degradation into L-glutamate; L-glutamate from N-formimidoyl-L-glutamate (deiminase route): step 2/2. Its activity is regulated as follows. Stimulated by Co(2+). Fe(2+) is also a good activator, particularly at lower concentrations, but it inhibits slightly the activity when used at concentrations over 0.1 mM. Other divalent metals tested (Cd(2+), Ca(2+), Mn(2+), Zn(2+), Ni(2+) and Mg(2+)) are not effective activators. Catalyzes the hydrolysis of N-formyl-L-glutamate to formate and L-glutamate. The polypeptide is N-formylglutamate deformylase (Pseudomonas putida (Arthrobacter siderocapsulatus)).